The chain runs to 248 residues: Stress-related protein (248 aa).

This sequence belongs to the REF/SRPP family.

This Vitis riparia (Frost grape) protein is Stress-related protein (SRP).